Reading from the N-terminus, the 247-residue chain is Chymase (247 aa).

The first 19 residues, 1 to 19 (MLLLPLPLLLLFLCSRAEA), serve as a signal peptide directing secretion. Residues 20–21 (GE) constitute a propeptide, activation peptide. In terms of domain architecture, Peptidase S1 spans 22-245 (IIGGTECKPH…YRPWINKILQ (224 aa)). A disulfide bridge connects residues Cys-51 and Cys-67. The active-site Charge relay system is His-66. Asn-80 and Asn-103 each carry an N-linked (GlcNAc...) asparagine glycan. Asp-110 acts as the Charge relay system in catalysis. 2 disulfides stabilise this stretch: Cys-144–Cys-209 and Cys-175–Cys-188. Ser-203 functions as the Charge relay system in the catalytic mechanism.

It belongs to the peptidase S1 family. Granzyme subfamily.

Its subcellular location is the secreted. It localises to the cytoplasmic granule. The enzyme catalyses Preferential cleavage: Phe-|-Xaa &gt; Tyr-|-Xaa &gt; Trp-|-Xaa &gt; Leu-|-Xaa.. Its function is as follows. Major secreted protease of mast cells with suspected roles in vasoactive peptide generation, extracellular matrix degradation, and regulation of gland secretion. In Papio hamadryas (Hamadryas baboon), this protein is Chymase (CMA1).